We begin with the raw amino-acid sequence, 303 residues long: Methionyl-tRNA formyltransferase (303 aa).

Position 111-114 (111-114) interacts with (6S)-5,6,7,8-tetrahydrofolate; it reads SLLP.

This sequence belongs to the Fmt family.

It carries out the reaction L-methionyl-tRNA(fMet) + (6R)-10-formyltetrahydrofolate = N-formyl-L-methionyl-tRNA(fMet) + (6S)-5,6,7,8-tetrahydrofolate + H(+). Its function is as follows. Attaches a formyl group to the free amino group of methionyl-tRNA(fMet). The formyl group appears to play a dual role in the initiator identity of N-formylmethionyl-tRNA by promoting its recognition by IF2 and preventing the misappropriation of this tRNA by the elongation apparatus. The chain is Methionyl-tRNA formyltransferase from Ehrlichia chaffeensis (strain ATCC CRL-10679 / Arkansas).